The sequence spans 138 residues: uncharacterized protein (138 aa).

The next 3 membrane-spanning stretches (helical) occupy residues 17–37, 43–63, and 117–137; these read LIVS…TVFF, INLI…LLVC, and FWWM…VVSL.

It localises to the cell membrane. This is an uncharacterized protein from Mycoplasma pneumoniae (strain ATCC 29342 / M129 / Subtype 1) (Mycoplasmoides pneumoniae).